The following is a 1396-amino-acid chain: MDEAAGPSTSRTSNLEDVDDEGASLAEEDEEHTKALKAKEMMAPLFQRYNFTMKKNDLPINWNKPEILDKIRSNAVVVLQGATGCGKTTQVPQYLLEEAFERKEYCNIIVTQPRKIAAISIARRVAQERKCDLGTLVGYKVGLKEQHNEDTRLLYVTTGVLLQSLINSKTMATYTHVILDEVHEREVDMDFLLIVVRRLLSTNSKKTKVILMSATIDAKGFSEYFKIPKKSGYLSAPVISVERPRLHVVQEFYFDDLEKLKVDFQIDYEAPGISEQMYNIAAKLVVVCDHLKGQEFGDSLEYKPSIIIFLPGINEIEKMEGALEKLIASIQNAAQRPNLLIMKLHSTLPADDQTAVFRKPGPNQRKVILSTNIAESSITVPDIKFVIDFCLQRILVTDTLTNFSTLRTEWASKSNCIQRAGRAGRLMSGRVYRLVDRRFFENNMDVSTSPEILRCPLETVVLKAKLLEMGTPPSILALAMAPPNLDDIRNTILLLKEVGAMLRTVKGNYDQLDGDLTYLGRIMSKLPLDIRISKLIMLGYIFSVMEEAVTIGAGMNVKNIFLNQNSVKTYSQKMYWADGSGSDAIAILNAYTAWKSRQEQAGDTADMYNWARRMSLDRKSLIDMAELIHEVKDRLNRSGLKPVSGPNRVVWNAREKTVILKVILAGAFYPNYFIPMSVGGKELMERQSFTELGGRDPCNTVFFTGFDHERYIGPLYTVQIKKILSEGDYSKHQAMKVMYDRTTNRIFVTFLGTTDERDQRGSFMPGKVHADVYRAIKLRKLGARNRITEIRTMRQRDAIDYATSAGLGHWEDANGWVPRRKIVRNAHLSVLPPIFREKVVCQVTHVVHPNKFFLRPEDNRNKDIFREIHTQLNARQLHPFPADANFAMGQMVAAPVQENQETYARAVLRSYRNVRTTGSVSWTVFFIDYGHTAAMEETAFRQLDDSLGQLKDIPPRAFEATLTEIQPSAIISPQGSWTTESIHRFKELVLGKIFVAKVYSVVGVVASVELSRDEIRMNSELIRLKYAQYAEESYISKLDHDHRERKQREIMMDENLRNEVYRSAELTQNTYEDDELEDVNPPEDKLRCKVVLSGPHSPLETSASATIRSSVMKPVSIESDSVNSILLDSNPQDTHEKLLVAGGVNEQGNRLVLRQTSVMPNIPGFGAIMSLIFCPTAQLKKDKDETRVVTVLSGLGYDPSTGEALYPEHDMALTLDVVLNDDDITNINALRYTMDSILHTGEGQTDPKFGDASIQKLKLQVKQYIIKILEHERRFLDLRHAPNDYNWRCDLNLTAGSSSSKKMKGDFNIYDKKAIFPLLEPLNLLPVSASQLTFLKKHCHELHKLAHTDVQLPRHGITCQLCNNVLETLPQLRIHLYSKLHRDRESQIKYRSPQMY.

The tract at residues 1–34 is disordered; the sequence is MDEAAGPSTSRTSNLEDVDDEGASLAEEDEEHTK. Residues 16 to 30 are compositionally biased toward acidic residues; the sequence is EDVDDEGASLAEEDE. The 167-residue stretch at 68–234 folds into the Helicase ATP-binding domain; the sequence is LDKIRSNAVV…FKIPKKSGYL (167 aa). 81–88 is an ATP binding site; the sequence is GATGCGKT. Positions 180–183 match the DEAH box motif; sequence DEVH. The region spanning 292-468 is the Helicase C-terminal domain; that stretch reads KGQEFGDSLE…TVVLKAKLLE (177 aa). The region spanning 885–950 is the Tudor domain; the sequence is NFAMGQMVAA…RQLDDSLGQL (66 aa).

It belongs to the DEAD box helicase family. DEAH subfamily.

It localises to the cytoplasm. The enzyme catalyses ATP + H2O = ADP + phosphate + H(+). Probable ATP-binding RNA helicase which plays a central role during gametogenesis by repressing transposable elements and preventing their mobilization, which is essential for the germline integrity. Acts via the piRNA metabolic process, which mediates the repression of transposable elements during meiosis by forming complexes composed of piRNAs and Piwi proteins and govern the methylation and subsequent repression of transposons. This Culex quinquefasciatus (Southern house mosquito) protein is Probable ATP-dependent RNA helicase spindle-E (spn-E).